Here is a 139-residue protein sequence, read N- to C-terminus: uncharacterized protein (139 aa).

The 62-residue stretch at 1-62 folds into the HTH asnC-type domain; the sequence is MDDTDLQILS…NICYEKLNKH (62 aa). A DNA-binding region (H-T-H motif) is located at residues 20–39; sequence MVELGKLVGLSSPSAAERVR.

This is an uncharacterized protein from Bacillus subtilis (strain 168).